We begin with the raw amino-acid sequence, 42 residues long: Delta-hexatoxin-Iw1a (42 aa).

Intrachain disulfides connect Cys1-Cys15, Cys8-Cys20, Cys14-Cys31, and Cys16-Cys42.

Belongs to the neurotoxin 06 (delta-actx) family. Expressed by the venom gland.

The protein localises to the secreted. Inhibits tetrodotoxin-sensitive sodium channels by binding to site 3. It slows the inactivation, causes a prolongation of action potential duration resulting in repetitive firing in autonomic and motor nerve fibers. Does not depolarize the resting potential. Does not affect tetrodotoxin-resistant sodium channels. This lethal neurotoxin is active on both insect and mammalian voltage-gated sodium channels (Nav). The chain is Delta-hexatoxin-Iw1a from Illawarra wisharti (Illawarra funnel-web spider).